We begin with the raw amino-acid sequence, 688 residues long: UvrABC system protein B (688 aa).

A Helicase ATP-binding domain is found at 31-188 (GRVNAGEPDV…RKFVSMQYQR (158 aa)). 44–51 (GATGTGKS) contacts ATP. The Beta-hairpin motif lies at 97-120 (YYDYYQPEAYVPQTDTFIEKDSSV). One can recognise a Helicase C-terminal domain in the interval 434 to 587 (QIDDLLEQIR…QVAYNTEHGI (154 aa)). Residues 607 to 632 (GEDTKKMLEGRGGGKRSPTPNLRREG) form a disordered region. One can recognise a UVR domain in the interval 642–677 (ETIISDLNDQMLQAAGELKFELAARLRDELGDLKRE).

This sequence belongs to the UvrB family. As to quaternary structure, forms a heterotetramer with UvrA during the search for lesions. Interacts with UvrC in an incision complex.

It localises to the cytoplasm. In terms of biological role, the UvrABC repair system catalyzes the recognition and processing of DNA lesions. A damage recognition complex composed of 2 UvrA and 2 UvrB subunits scans DNA for abnormalities. Upon binding of the UvrA(2)B(2) complex to a putative damaged site, the DNA wraps around one UvrB monomer. DNA wrap is dependent on ATP binding by UvrB and probably causes local melting of the DNA helix, facilitating insertion of UvrB beta-hairpin between the DNA strands. Then UvrB probes one DNA strand for the presence of a lesion. If a lesion is found the UvrA subunits dissociate and the UvrB-DNA preincision complex is formed. This complex is subsequently bound by UvrC and the second UvrB is released. If no lesion is found, the DNA wraps around the other UvrB subunit that will check the other stand for damage. The protein is UvrABC system protein B of Clavibacter sepedonicus (Clavibacter michiganensis subsp. sepedonicus).